The sequence spans 346 residues: tRNA N6-adenosine threonylcarbamoyltransferase (346 aa).

A divalent metal cation contacts are provided by histidine 117, histidine 121, and tyrosine 138. Substrate is bound by residues 138-142 (YVSGG), aspartate 170, glycine 185, and asparagine 277. Aspartate 305 serves as a coordination point for a divalent metal cation.

It belongs to the KAE1 / TsaD family. Component of the EKC/KEOPS complex composed of at least SPAP27G11.07c/BUD32, cgi121, gon7, pgp2 and SPAC4H3.13/PCC1; the whole complex dimerizes. A divalent metal cation serves as cofactor.

The protein resides in the cytoplasm. Its subcellular location is the nucleus. It catalyses the reaction L-threonylcarbamoyladenylate + adenosine(37) in tRNA = N(6)-L-threonylcarbamoyladenosine(37) in tRNA + AMP + H(+). Its function is as follows. Component of the EKC/KEOPS complex that is required for the formation of a threonylcarbamoyl group on adenosine at position 37 (t(6)A37) in tRNAs that read codons beginning with adenine. The complex is probably involved in the transfer of the threonylcarbamoyl moiety of threonylcarbamoyl-AMP (TC-AMP) to the N6 group of A37. Pgp2 likely plays a direct catalytic role in this reaction, but requires other protein(s) of the complex to fulfill this activity. The EKC/KEOPS complex also promotes both telomere uncapping and telomere elongation. The complex is required for efficient recruitment of transcriptional coactivators. This chain is tRNA N6-adenosine threonylcarbamoyltransferase (pgp2), found in Schizosaccharomyces pombe (strain 972 / ATCC 24843) (Fission yeast).